Reading from the N-terminus, the 620-residue chain is Eukaryotic translation initiation factor 2-alpha kinase 1 (620 aa).

Residues 1–38 form a disordered region; that stretch reads MLGGGSVDGERDTDDDAAGAVAAPPAIDFPAEVSDPKY. Residues 18-28 show a composition bias toward low complexity; it reads AGAVAAPPAID. The SIFI-degron signature appears at 85 to 104; sequence LHSKQVFKLLCQTFIKMGLL. The Protein kinase domain occupies 167-581; sequence FEELAILGKG…ALQLLQSELF (415 aa). ATP contacts are provided by residues 173 to 181 and lysine 196; that span reads LGKGGYGRV. Threonine 283 bears the Phosphothreonine mark. One copy of the HRM 1 repeat lies at 408 to 413; the sequence is ACPYVM. Aspartate 440 acts as the Proton acceptor in catalysis. A phosphothreonine; by autocatalysis mark is found at threonine 484 and threonine 486. Threonine 491 is subject to Phosphothreonine. Residues 550–555 form an HRM 2 repeat; sequence RCPVQA.

Belongs to the protein kinase superfamily. Ser/Thr protein kinase family. GCN2 subfamily. As to quaternary structure, synthesized in an inactive form that binds to the N-terminal domain of CDC37. Has to be associated with a multiprotein complex containing Hsp90, CDC37 and PPP5C for maturation and activation by autophosphorylation. The phosphatase PPP5C modulates this activation. Homodimer; homodimerizes in presence of heme, forming a disulfide-linked inactive homodimer. Interacts with DELE1; binds both to full-length DELE1 and processed form of DELE1 (S-DELE1) in response to stress, leading to activate its protein kinase activity and trigger the integrated stress response (ISR). Activated by autophosphorylation; phosphorylated predominantly on serine and threonine residues, but also on tyrosine residues. Autophosphorylation at Thr-486 is required for kinase activation. The active autophosphorylated form apparently is largely refractory to cellular heme fluctuations. In terms of processing, ubiquitinated and degraded by the SIFI complex once the mitochondrial stress has been resolved, thereby providing stress response silencing. Within the SIFI complex, UBR4 initiates ubiquitin chain that are further elongated or branched by KCMF1.

It is found in the cytoplasm. It carries out the reaction L-seryl-[protein] + ATP = O-phospho-L-seryl-[protein] + ADP + H(+). The catalysed reaction is L-threonyl-[protein] + ATP = O-phospho-L-threonyl-[protein] + ADP + H(+). Its activity is regulated as follows. In normal conditions, the protein kinase activity is inhibited; inhibition is relieved by various stress conditions. Inhibited by heme: in presence of heme, forms a disulfide-linked inactive homodimer. Heme depletion relieves inhibition and stimulates kinase activity by autophosphorylation. Inhibited by the heme metabolites biliverdin and bilirubin. Induced by oxidative stress generated by arsenite treatment. Binding of nitric oxide (NO) to the heme iron in the N-terminal heme-binding domain activates the kinase activity, while binding of carbon monoxide (CO) suppresses kinase activity. Protein kinase activity is also activated upon binding to DELE1 in response to various stress, triggering the integrated stress response (ISR): activated by full-length DELE1 in response to iron deficiency, while it is activated by the processed form of DELE1 (S-DELE1) in response to mitochondrial stress. Metabolic-stress sensing protein kinase that phosphorylates the alpha subunit of eukaryotic translation initiation factor 2 (EIF2S1/eIF-2-alpha) in response to various stress conditions. Key activator of the integrated stress response (ISR) required for adaptation to various stress, such as heme deficiency, oxidative stress, osmotic shock, mitochondrial dysfunction and heat shock. EIF2S1/eIF-2-alpha phosphorylation in response to stress converts EIF2S1/eIF-2-alpha in a global protein synthesis inhibitor, leading to a global attenuation of cap-dependent translation, while concomitantly initiating the preferential translation of ISR-specific mRNAs, such as the transcriptional activator ATF4, and hence allowing ATF4-mediated reprogramming. Acts as a key sensor of heme-deficiency: in normal conditions, binds hemin via a cysteine thiolate and histidine nitrogenous coordination, leading to inhibit the protein kinase activity. This binding occurs with moderate affinity, allowing it to sense the heme concentration within the cell: heme depletion relieves inhibition and stimulates kinase activity, activating the ISR. Thanks to this unique heme-sensing capacity, plays a crucial role to shut off protein synthesis during acute heme-deficient conditions. In red blood cells (RBCs), controls hemoglobin synthesis ensuring a coordinated regulation of the synthesis of its heme and globin moieties. It thereby plays an essential protective role for RBC survival in anemias of iron deficiency. Iron deficiency also triggers activation by full-length DELE1. Also activates the ISR in response to mitochondrial dysfunction: HRI/EIF2AK1 protein kinase activity is activated upon binding to the processed form of DELE1 (S-DELE1), thereby promoting the ATF4-mediated reprogramming. Also acts as an activator of mitophagy in response to mitochondrial damage: catalyzes phosphorylation of eIF-2-alpha (EIF2S1) following activation by S-DELE1, thereby promoting mitochondrial localization of EIF2S1, triggering PRKN-independent mitophagy. This Rattus norvegicus (Rat) protein is Eukaryotic translation initiation factor 2-alpha kinase 1.